Consider the following 265-residue polypeptide: Interleukin-2 receptor subunit alpha (265 aa).

The signal sequence occupies residues 1–21; it reads MDSYLLMWGLLTLIMVPGCFA. The Sushi 1 domain maps to 22-84; that stretch reads ELCDDDPPEI…SWDNQCQCTS (63 aa). At 22–240 the chain is on the extracellular side; it reads ELCDDDPPEI…ETFIFTTEYQ (219 aa). Intrachain disulfides connect Cys24-Cys67, Cys49-Cys80, and Cys51-Cys82. Residues Asn70 and Asn89 are each glycosylated (N-linked (GlcNAc...) asparagine). Over residues 87–98 the composition is skewed to polar residues; sequence TRNTTKQVTPQP. The disordered stretch occupies residues 87–123; sequence TRNTTKQVTPQPEEQKERKTTEMQSPMQPVDQASLPG. In terms of domain architecture, Sushi 2 spans 123-186; sequence GHCREPPPWE…WTQPQLICTG (64 aa). 2 cysteine pairs are disulfide-bonded: Cys125/Cys168 and Cys152/Cys184. Positions 190-210 are disordered; that stretch reads TSQFPGEEKPQASPEGRPESE. Residues 195–209 show a composition bias toward basic and acidic residues; sequence GEEKPQASPEGRPES. The helical transmembrane segment at 241–259 threads the bilayer; that stretch reads VAVAGCVFLLISVLLLSGL. Topologically, residues 260-265 are cytoplasmic; the sequence is TWQRRQ.

Non-covalent dimer of an alpha and a beta subunit. IL2R exists in 3 different forms: a high affinity dimer, an intermediate affinity monomer (beta subunit), and a low affinity monomer (alpha subunit). The high and intermediate affinity forms also associate with a gamma subunit.

It localises to the membrane. In terms of biological role, receptor for interleukin-2. The receptor is involved in the regulation of immune tolerance by controlling regulatory T cells (TREGs) activity. TREGs suppress the activation and expansion of autoreactive T-cells. The protein is Interleukin-2 receptor subunit alpha (IL2RA) of Pan troglodytes (Chimpanzee).